We begin with the raw amino-acid sequence, 346 residues long: Phosphoribosylformylglycinamidine cyclo-ligase (346 aa).

It belongs to the AIR synthase family.

Its subcellular location is the cytoplasm. It carries out the reaction 2-formamido-N(1)-(5-O-phospho-beta-D-ribosyl)acetamidine + ATP = 5-amino-1-(5-phospho-beta-D-ribosyl)imidazole + ADP + phosphate + H(+). The protein operates within purine metabolism; IMP biosynthesis via de novo pathway; 5-amino-1-(5-phospho-D-ribosyl)imidazole from N(2)-formyl-N(1)-(5-phospho-D-ribosyl)glycinamide: step 2/2. The protein is Phosphoribosylformylglycinamidine cyclo-ligase of Prochlorococcus marinus (strain NATL1A).